The primary structure comprises 129 residues: Glycine cleavage system H protein (129 aa).

Residues Ser-24 to Met-106 enclose the Lipoyl-binding domain. The residue at position 65 (Lys-65) is an N6-lipoyllysine.

This sequence belongs to the GcvH family. As to quaternary structure, the glycine cleavage system is composed of four proteins: P, T, L and H. (R)-lipoate serves as cofactor.

In terms of biological role, the glycine cleavage system catalyzes the degradation of glycine. The H protein shuttles the methylamine group of glycine from the P protein to the T protein. The sequence is that of Glycine cleavage system H protein from Shewanella putrefaciens (strain CN-32 / ATCC BAA-453).